Here is an 89-residue protein sequence, read N- to C-terminus: Small ribosomal subunit protein uS15 (89 aa).

The disordered stretch occupies residues 1-23 (MALTKERTASVVQQYGSGEKDTG).

It belongs to the universal ribosomal protein uS15 family. Part of the 30S ribosomal subunit. Forms a bridge to the 50S subunit in the 70S ribosome, contacting the 23S rRNA.

Functionally, one of the primary rRNA binding proteins, it binds directly to 16S rRNA where it helps nucleate assembly of the platform of the 30S subunit by binding and bridging several RNA helices of the 16S rRNA. In terms of biological role, forms an intersubunit bridge (bridge B4) with the 23S rRNA of the 50S subunit in the ribosome. The polypeptide is Small ribosomal subunit protein uS15 (Treponema pallidum (strain Nichols)).